A 384-amino-acid chain; its full sequence is Geranylgeranyl pyrophosphate synthase (384 aa).

2 disordered regions span residues 1-25 (MVPN…TSST) and 39-78 (RPVP…PARY). The segment covering 47 to 62 (LGQNNTRNRSSSTTAI) has biased composition (polar residues). 3 residues coordinate isopentenyl diphosphate: Lys-112, Arg-115, and His-144. Mg(2+) is bound by residues Asp-151 and Asp-155. Dimethylallyl diphosphate is bound at residue Arg-160. Arg-161 is an isopentenyl diphosphate binding site. Dimethylallyl diphosphate contacts are provided by Lys-238, Thr-239, and Gln-272. Asp-275 provides a ligand contact to Mg(2+). Dimethylallyl diphosphate contacts are provided by Asn-279, Lys-289, and Lys-299.

The protein belongs to the FPP/GGPP synthase family. It depends on Mg(2+) as a cofactor.

It catalyses the reaction isopentenyl diphosphate + dimethylallyl diphosphate = (2E)-geranyl diphosphate + diphosphate. It carries out the reaction isopentenyl diphosphate + (2E)-geranyl diphosphate = (2E,6E)-farnesyl diphosphate + diphosphate. The catalysed reaction is isopentenyl diphosphate + (2E,6E)-farnesyl diphosphate = (2E,6E,10E)-geranylgeranyl diphosphate + diphosphate. Its pathway is secondary metabolite biosynthesis. Functionally, catalyzes the trans-addition of the 3 molecules of isopentenyl diphosphate (IPP) onto dimethylallyl diphosphate (DMAPP) to form geranylgeranyl pyrophosphate (GGPP). GGPP is a precursor for the biosynthesis of many secondary metabolites, including the indole diterpenes nodulisporic acids (NA). In Hypoxylon pulicicidum, this protein is Geranylgeranyl pyrophosphate synthase.